We begin with the raw amino-acid sequence, 258 residues long: UDP-2,3-diacylglucosamine hydrolase (258 aa).

Asp15, His17, Asp48, Asn88, and His123 together coordinate Mn(2+). A substrate-binding site is contributed by 88–89 (NR). Substrate contacts are provided by Asp131, Ser169, Asn173, Lys176, and His204. The Mn(2+) site is built by His204 and His206.

This sequence belongs to the LpxH family. Mn(2+) serves as cofactor.

It is found in the cell inner membrane. It carries out the reaction UDP-2-N,3-O-bis[(3R)-3-hydroxytetradecanoyl]-alpha-D-glucosamine + H2O = 2-N,3-O-bis[(3R)-3-hydroxytetradecanoyl]-alpha-D-glucosaminyl 1-phosphate + UMP + 2 H(+). The protein operates within glycolipid biosynthesis; lipid IV(A) biosynthesis; lipid IV(A) from (3R)-3-hydroxytetradecanoyl-[acyl-carrier-protein] and UDP-N-acetyl-alpha-D-glucosamine: step 4/6. Functionally, hydrolyzes the pyrophosphate bond of UDP-2,3-diacylglucosamine to yield 2,3-diacylglucosamine 1-phosphate (lipid X) and UMP by catalyzing the attack of water at the alpha-P atom. Involved in the biosynthesis of lipid A, a phosphorylated glycolipid that anchors the lipopolysaccharide to the outer membrane of the cell. In Bordetella pertussis (strain Tohama I / ATCC BAA-589 / NCTC 13251), this protein is UDP-2,3-diacylglucosamine hydrolase.